Here is a 1196-residue protein sequence, read N- to C-terminus: Major DNA-binding protein (1196 aa).

A zinc finger lies at 499 to 512 (CNLCTFDTRHACVH). 2 short sequence motifs (required for filament formation) span residues 843-844 (FW) and 1142-1144 (FNF). Residues 1158-1196 (GGPGAPGPAFAGRKRAFHGDDPFGEGPPDKKGDLTLDML) form a disordered region. The segment at 1170–1196 (RKRAFHGDDPFGEGPPDKKGDLTLDML) is required for nuclear localization. The segment covering 1174-1196 (FHGDDPFGEGPPDKKGDLTLDML) has biased composition (basic and acidic residues).

Belongs to the herpesviridae major DNA-binding protein family. Homooligomers. Forms double-helical filaments necessary for the formation of replication compartments within the host nucleus. Interacts with the origin-binding protein. Interacts with the helicase primase complex; this interaction stimulates primer synthesis activity of the helicase-primase complex. Interacts with the DNA polymerase. Interacts with the alkaline exonuclease; this interaction increases its nuclease processivity. Interacts with ICP27; this interaction plays a role in the stimulation of late gene transcription.

Its subcellular location is the host nucleus. In terms of biological role, plays several crucial roles in viral infection. Participates in the opening of the viral DNA origin to initiate replication by interacting with the origin-binding protein. May disrupt loops, hairpins and other secondary structures present on ssDNA to reduce and eliminate pausing of viral DNA polymerase at specific sites during elongation. Promotes viral DNA recombination by performing strand-transfer, characterized by the ability to transfer a DNA strand from a linear duplex to a complementary single-stranded DNA circle. Can also catalyze the renaturation of complementary single strands. Additionally, reorganizes the host cell nucleus, leading to the formation of prereplicative sites and replication compartments. This process is driven by the protein which can form double-helical filaments in the absence of DNA. This is Major DNA-binding protein from Homo sapiens (Human).